The primary structure comprises 151 residues: Transcriptional repressor NrdR (151 aa).

The segment at 3–34 is a zinc-finger region; that stretch reads CPYCAYGESKVVDSRSTEDGSSIRRRRECLKC. The 91-residue stretch at 49–139 folds into the ATP-cone domain; it reads ILVIKKNMSR…VYRQFKDINT (91 aa).

This sequence belongs to the NrdR family. Requires Zn(2+) as cofactor.

Its function is as follows. Negatively regulates transcription of bacterial ribonucleotide reductase nrd genes and operons by binding to NrdR-boxes. The polypeptide is Transcriptional repressor NrdR (Clostridium botulinum (strain ATCC 19397 / Type A)).